The chain runs to 414 residues: GA-binding protein subunit beta-2 (414 aa).

ANK repeat units lie at residues 5–34 (DLGK…PFTT), 37–66 (LGTS…SRDA), 70–99 (VDRT…DVNA), 103–132 (LQMT…DVYA), and 136–166 (FDKS…QVNT). Serine 218 carries the post-translational modification Phosphoserine. Residues 310–362 (EEMKEGSERELLQQQLQEANRRAQEYRHQLLKKEQEAEQYRLRLEAMAQQQTN) adopt a coiled-coil conformation.

Heterotetramer of two alpha and two beta subunits. The C-terminal is necessary for the formation of a heterotetrameric GABP-alpha-2/beta-2 complex, and also facilitates homotypic dimerization. Interacts with ADGRB2. In terms of tissue distribution, high levels in thymus, spleen, kidney and intestine.

The protein localises to the nucleus. In terms of biological role, transcription factor capable of interacting with purine rich repeats (GA repeats). Must associate with GABP-alpha to bind DNA. This is GA-binding protein subunit beta-2 (Gabpb2) from Mus musculus (Mouse).